A 188-amino-acid chain; its full sequence is Ribosome-recycling factor (188 aa).

It belongs to the RRF family.

The protein resides in the cytoplasm. Responsible for the release of ribosomes from messenger RNA at the termination of protein biosynthesis. May increase the efficiency of translation by recycling ribosomes from one round of translation to another. This Anaeromyxobacter dehalogenans (strain 2CP-1 / ATCC BAA-258) protein is Ribosome-recycling factor.